A 318-amino-acid chain; its full sequence is Ribosomal lysine N-methyltransferase 5 (318 aa).

S-adenosyl-L-methionine-binding positions include W95, G139–G141, D161, W214, and M241.

The protein belongs to the class I-like SAM-binding methyltransferase superfamily. RKM5 family.

In terms of biological role, S-adenosyl-L-methionine-dependent protein-lysine N-methyltransferase that methylates 60S ribosomal protein L1. This chain is Ribosomal lysine N-methyltransferase 5 (RKM5), found in Zygosaccharomyces rouxii (strain ATCC 2623 / CBS 732 / NBRC 1130 / NCYC 568 / NRRL Y-229).